Reading from the N-terminus, the 64-residue chain is Short neurotoxin 1 (64 aa).

4 disulfide bridges follow: C3-C26, C20-C43, C45-C56, and C57-C62.

Belongs to the three-finger toxin family. Short-chain subfamily. Type I alpha-neurotoxin sub-subfamily. Expressed by the venom gland.

It is found in the secreted. Binds to muscle nicotinic acetylcholine receptor (nAChR) and inhibit acetylcholine from binding to the receptor, thereby impairing neuromuscular transmission. This Bungarus fasciatus (Banded krait) protein is Short neurotoxin 1.